Reading from the N-terminus, the 673-residue chain is UvrABC system protein B (673 aa).

Residues 26–414 (EGLEDGLAHQ…GDEVVDQVVR (389 aa)) enclose the Helicase ATP-binding domain. 39–46 (GVTGSGKT) is an ATP binding site. The Beta-hairpin signature appears at 92–115 (YYDYYQPEAYVPSSDTFIEKDASV). The region spanning 431 to 597 (QVDDLLSEIR…GLNKKVVDIL (167 aa)) is the Helicase C-terminal domain. Residues 633–668 (QQKIHELEEQMMQHAQNLEFEEAAQIRDQLHQLREL) enclose the UVR domain.

The protein belongs to the UvrB family. In terms of assembly, forms a heterotetramer with UvrA during the search for lesions. Interacts with UvrC in an incision complex.

It localises to the cytoplasm. In terms of biological role, the UvrABC repair system catalyzes the recognition and processing of DNA lesions. A damage recognition complex composed of 2 UvrA and 2 UvrB subunits scans DNA for abnormalities. Upon binding of the UvrA(2)B(2) complex to a putative damaged site, the DNA wraps around one UvrB monomer. DNA wrap is dependent on ATP binding by UvrB and probably causes local melting of the DNA helix, facilitating insertion of UvrB beta-hairpin between the DNA strands. Then UvrB probes one DNA strand for the presence of a lesion. If a lesion is found the UvrA subunits dissociate and the UvrB-DNA preincision complex is formed. This complex is subsequently bound by UvrC and the second UvrB is released. If no lesion is found, the DNA wraps around the other UvrB subunit that will check the other stand for damage. In Salmonella typhi, this protein is UvrABC system protein B.